A 339-amino-acid polypeptide reads, in one-letter code: Neutrophil cytosol factor 4 (339 aa).

The 122-residue stretch at 19 to 140 (DVAVSANIAD…IFFYQSAYDA (122 aa)) folds into the PX domain. A 1,2-diacyl-sn-glycero-3-phospho-(1D-myo-inositol-3-phosphate) is bound by residues 58-60 (RYR) and 92-94 (KVY). Thr154 carries the post-translational modification Phosphothreonine. Residues 170 to 229 (MEAPRAEALFDFTGNSKLELSFKAGDVIFLLSKINKDWLEGTSQGATGIFPGSFVKILKD) form the SH3 domain. The 93-residue stretch at 237–329 (TNWLRCYFYE…FPWKLHVTQK (93 aa)) folds into the PB1 domain. Ser315 carries the post-translational modification Phosphoserine.

As to quaternary structure, component of the phagocyte NADPH oxidase complex composed of an obligatory core heterodimer formed by the membrane proteins CYBA and CYBB and the cytosolic regulatory subunits NCF1/p47-phox, NCF2/p67-phox, NCF4/p40-phox and the small GTPase RAC1 or RAC2. Part of a cytosolic complex composed at least by NCF1, NCF2 and NCF4. Interacts with NCF2. Interacts with NCF1. The NCF2-NCF4 complex interacts with GBP7 (via GB1/RHD3-type G domain).

It is found in the cytoplasm. It localises to the cytosol. Its subcellular location is the endosome membrane. The protein resides in the membrane. Its function is as follows. Subunit of the phagocyte NADPH oxidase complex that mediates the transfer of electrons from cytosolic NADPH to O2 to produce the superoxide anion (O2(-)). In the activated complex, electrons are first transferred from NADPH to flavin adenine dinucleotide (FAD) and subsequently transferred via two heme molecules to molecular oxygen, producing superoxide through an outer-sphere reaction. Activation of the NADPH oxidase complex is initiated by the assembly of cytosolic subunits of the NADPH oxidase complex with the core NADPH oxidase complex to form a complex at the plasma membrane or phagosomal membrane. This activation process is initiated by phosphorylation dependent binding of the cytosolic NCF1/p47-phox subunit to the C-terminus of CYBA/p22-phox. The chain is Neutrophil cytosol factor 4 from Mus musculus (Mouse).